Here is a 342-residue protein sequence, read N- to C-terminus: MQFIDQAQIEVEAGKGGDGIVAFRREKYVPAGGPSGGNGGRGGSVIFVAVENLQTLLDFRYKHIFKADDGGRGGPNNCTGASGKDLIVQVPCGTTIYDAETGDLLGDLTQPNQELIIAAGGKGGLGNQYFLSNRNRAPEYSLPGLPGERKLLRLELKLLAEVGIIGLPNAGKSTLISSLSAARPKIADYPFTTLIPNLGVVRKPTGDGTVFADIPGLIEGAADGAGLGHDFLRHIERTRVLLHLIDATSDDVIRDYNTIEQELQAYGRGLNERMQILALNKIDAVDRETVDLEALAIQLNHLSHAPVFLISAVTRTGLEPMLQEVWGILDQVNALEEAEVFS.

In terms of domain architecture, Obg spans 1–159 (MQFIDQAQIE…KLLRLELKLL (159 aa)). Residues 160 to 330 (AEVGIIGLPN…MLQEVWGILD (171 aa)) enclose the OBG-type G domain. Residues 166-173 (GLPNAGKS), 191-195 (FTTLI), 213-216 (DIPG), 280-283 (NKID), and 311-313 (SAV) each bind GTP. The Mg(2+) site is built by S173 and T193.

Belongs to the TRAFAC class OBG-HflX-like GTPase superfamily. OBG GTPase family. In terms of assembly, monomer. Mg(2+) serves as cofactor.

The protein resides in the cytoplasm. In terms of biological role, an essential GTPase which binds GTP, GDP and possibly (p)ppGpp with moderate affinity, with high nucleotide exchange rates and a fairly low GTP hydrolysis rate. Plays a role in control of the cell cycle, stress response, ribosome biogenesis and in those bacteria that undergo differentiation, in morphogenesis control. The protein is GTPase Obg of Nostoc sp. (strain PCC 7120 / SAG 25.82 / UTEX 2576).